A 430-amino-acid polypeptide reads, in one-letter code: Enolase (430 aa).

Glutamine 163 serves as a coordination point for (2R)-2-phosphoglycerate. Glutamate 205 serves as the catalytic Proton donor. Aspartate 242, glutamate 285, and aspartate 312 together coordinate Mg(2+). (2R)-2-phosphoglycerate contacts are provided by lysine 337, arginine 366, serine 367, and lysine 388. Lysine 337 (proton acceptor) is an active-site residue.

Belongs to the enolase family. It depends on Mg(2+) as a cofactor.

Its subcellular location is the cytoplasm. It localises to the secreted. The protein localises to the cell surface. The enzyme catalyses (2R)-2-phosphoglycerate = phosphoenolpyruvate + H2O. It functions in the pathway carbohydrate degradation; glycolysis; pyruvate from D-glyceraldehyde 3-phosphate: step 4/5. Its function is as follows. Catalyzes the reversible conversion of 2-phosphoglycerate (2-PG) into phosphoenolpyruvate (PEP). It is essential for the degradation of carbohydrates via glycolysis. This is Enolase from Rhodopseudomonas palustris (strain BisB18).